The following is a 343-amino-acid chain: Protein RecA (343 aa).

66–73 (GPESSGKT) serves as a coordination point for ATP.

Belongs to the RecA family.

It is found in the cytoplasm. In terms of biological role, can catalyze the hydrolysis of ATP in the presence of single-stranded DNA, the ATP-dependent uptake of single-stranded DNA by duplex DNA, and the ATP-dependent hybridization of homologous single-stranded DNAs. It interacts with LexA causing its activation and leading to its autocatalytic cleavage. This is Protein RecA from Rickettsia canadensis (strain McKiel).